The following is a 509-amino-acid chain: Zinc finger protein Aiolos (509 aa).

Residues 1-85 (MEDIKPNVEL…PMGNAEEPEI (85 aa)) form a disordered region. Over residues 10–20 (LKSTQEQSVPT) the composition is skewed to polar residues. T20 is modified (phosphothreonine). A compositionally biased stretch (basic and acidic residues) spans 56-72 (DSMKVKDEYSERDENVL). Glycyl lysine isopeptide (Lys-Gly) (interchain with G-Cter in SUMO2) cross-links involve residues K61, K73, and K100. C2H2-type zinc fingers lie at residues 118-140 (MNCDVCGLSCISFNVLMVHKRSH), 146-168 (FQCNQCGASFTQKGNLLRHIKLH), and 174-196 (FKCHLCNYACQRRDALTGHLRTH). A C2H2-type 4; atypical zinc finger spans residues 202-224 (YKCEFCGRSYKQRSSLEEHKERC). Residue K245 forms a Glycyl lysine isopeptide (Lys-Gly) (interchain with G-Cter in SUMO2) linkage. T326 carries the post-translational modification Phosphothreonine. Positions 365–421 (HLPEKSLPSERGLSPTNSGHDSTDTDSNHEERQNHIYQQNPMVPPRARNGMPLLKEG) are disordered. S378 carries the phosphoserine modification. The span at 385 to 398 (DSTDTDSNHEERQN) shows a compositional bias: basic and acidic residues. The C2H2-type 5 zinc finger occupies 452–474 (YRCDHCRVLFLDYVMFTIHMGCH). The mediates homodimerization and heterodimerization stretch occupies residues 452–504 (YRCDHCRVLFLDYVMFTIHMGCHGFRDPFECNMCGYRSHDRYEFSSHIARGEH). Residues 480 to 504 (FECNMCGYRSHDRYEFSSHIARGEH) form a C2H2-type 6; atypical zinc finger.

Belongs to the Ikaros C2H2-type zinc-finger protein family. Homodimer. Heterodimer with other IKAROS family members. Interacts with IKZF4 and IKZF5. Interacts with IKZF1. Interacts with HRAS. Interacts with FOXP3; this interaction may be required for silencing target genes and regulating the suppressive activity of FOXP3-positive regulatory T-cells (Treg). Interacts with BCL21L; this interaction blocks the anti-apoptotic role of BCL21L. Associates with histone deacetylase complexes containing HDAC1, MTA2 and SIN3A.

It localises to the nucleus. The protein localises to the cytoplasm. In terms of biological role, transcription factor that plays an important role in the regulation of lymphocyte differentiation. Plays an essential role in regulation of B-cell differentiation, proliferation and maturation to an effector state. Involved in regulating BCL2 expression and controlling apoptosis in T-cells in an IL2-dependent manner. The protein is Zinc finger protein Aiolos (IKZF3) of Bos taurus (Bovine).